The following is a 198-amino-acid chain: Cyclin-dependent kinase inhibitor 1B (198 aa).

Residues 1–11 are compositionally biased toward polar residues; it reads MSNVRVSNGSP. The disordered stretch occupies residues 1 to 34; the sequence is MSNVRVSNGSPSLERMDARQAEHPKPSACRNLFG. Position 10 is a phosphoserine; by UHMK1 (Ser10). A compositionally biased stretch (basic and acidic residues) spans 14-25; sequence ERMDARQAEHPK. The interaction with CDK2 stretch occupies residues 51–91; it reads DMEEASQRKWNFDFQNHNPLEGRYQWQEVDKGSLPEFYYRP. Tyr74 carries the phosphotyrosine; by SRC modification. The disordered stretch occupies residues 85 to 198; sequence PEFYYRPPRP…KKPGLRRHQT (114 aa). Residue Tyr88 is modified to Phosphotyrosine; by ABL, LYN and SRC. Tyr89 is modified (phosphotyrosine). The span at 104-124 shows a compositional bias: polar residues; the sequence is QESQDVSGSRQAVPSIGSQAY. The Nuclear localization signal motif lies at 153–169; that stretch reads KRPAADDSSSQNKRANR. Position 170 is a phosphothreonine (Thr170). Polar residues predominate over residues 175-186; sequence SDGSLNAGSVEQ. Residue Thr187 is modified to Phosphothreonine; by PKB/AKT1, CDK1 and CDK2. Phosphothreonine; by CaMK1, PKB/AKT1, RPS6KA1, RPS6KA3 and PIM1 is present on Thr198.

It belongs to the CDI family. In terms of assembly, forms a ternary complex composed of CCNE1, CDK2 and CDKN1B. Interacts directly with CCNE1; the interaction is inhibited by CDK2-dependent phosphorylation on Thr-187. Interacts with COPS5, subunit of the COP9 signalosome complex; the interaction leads to CDKN1B degradation. Interacts with NUP50; the interaction leads to nuclear import and degradation of phosphorylated CDKN1B. Interacts with CCND1 and SNX6. Interacts (Thr-198-phosphorylated form) with 14-3-3 proteins, binds strongly YWHAQ, weakly YWHAE and YWHAH, but not YWHAB nor YWHAZ; the interaction with YWHAQ results in translocation to the cytoplasm. Interacts with AKT1 and LYN; the interactions lead to cytoplasmic mislocation, phosphorylation of CDKN1B and inhibition of cell cycle arrest. Forms a ternary complex with CCNA2 and CDK2; CDKN1B inhibits the kinase activity of CDK2 through conformational rearrangements. Interacts (unphosphorylated form) with CDK2. Forms a complex with CDK2 and SPDYA, but does not directly interact with SPDYA. Forms a ternary complex composed of cyclin D, CDK4 and CDKN1B. Interacts (phosphorylated on Tyr-88 and Tyr-89) with CDK4; the interaction is required for cyclin D and CDK4 complex assembly, induces nuclear translocation and activates the CDK4 kinase activity. Interacts with GRB2. Interacts with PIM1. Identified in a complex with SKP1, SKP2 and CKS1B. Interacts with UHMK1; the interaction leads to cytoplasmic mislocation, phosphorylation of CDKN1B and inhibition of cell cycle arrest. Also interacts with CDK1. Dephosphorylated on Thr-187 by PPM1H, leading to CDKN1B stability. Phosphorylated; phosphorylation occurs on serine, threonine and tyrosine residues. Phosphorylation on Ser-10 is the major site of phosphorylation in resting cells, takes place at the G(0)-G(1) phase and leads to protein stability. Phosphorylation on other sites is greatly enhanced by mitogens, growth factors, cMYC and in certain cancer cell lines. The phosphorylated form found in the cytoplasm is inactivate. Phosphorylation on Thr-198 is required for interaction with 14-3-3 proteins. Phosphorylation on Thr-187, by CDK1 and CDK2 leads to protein ubiquitination and proteasomal degradation. Tyrosine phosphorylation promotes this process. Phosphorylation by PKB/AKT1 can be suppressed by LY294002, an inhibitor of the catalytic subunit of PI3K. Phosphorylation on Tyr-88 and Tyr-89 has no effect on binding CDK2, but is required for binding CDK4. Dephosphorylated on tyrosine residues by G-CSF. Dephosphorylated on Thr-187 by PPM1H, leading to CDKN1B stability. In terms of processing, ubiquitinated; in the cytoplasm by the KPC complex (composed of RNF123/KPC1 and UBAC1/KPC2) and, in the nucleus, by SCF(SKP2). The latter requires prior phosphorylation on Thr-187. Ubiquitinated; by a TRIM21-containing SCF(SKP2)-like complex; leads to its degradation. Post-translationally, subject to degradation in the lysosome. Interaction with SNX6 promotes lysosomal degradation.

The protein resides in the nucleus. Its subcellular location is the cytoplasm. It is found in the endosome. Functionally, important regulator of cell cycle progression. Inhibits the kinase activity of CDK2 bound to cyclin A, but has little inhibitory activity on CDK2 bound to SPDYA. Involved in G1 arrest. Potent inhibitor of cyclin E- and cyclin A-CDK2 complexes. Forms a complex with cyclin type D-CDK4 complexes and is involved in the assembly, stability, and modulation of CCND1-CDK4 complex activation. Acts either as an inhibitor or an activator of cyclin type D-CDK4 complexes depending on its phosphorylation state and/or stoichometry. The protein is Cyclin-dependent kinase inhibitor 1B (CDKN1B) of Cricetulus griseus (Chinese hamster).